A 689-amino-acid polypeptide reads, in one-letter code: Protein CFAP20DC (689 aa).

Disordered stretches follow at residues 143 to 179 (GPPP…TVEK), 217 to 236 (LPIM…NNNR), 241 to 262 (LKST…NNTN), 333 to 424 (SKES…PSEL), and 583 to 660 (SIST…LSVE). The span at 150–176 (RRSNMRISSETVRSVGSKNNRSCQPST) shows a compositional bias: polar residues. Residues 343–359 (EESQSVPKDIFTFSSRP) are compositionally biased toward polar residues. Over residues 394–405 (SEDDFYGGDSSE) the composition is skewed to acidic residues. The span at 411-421 (IQGSRGPTTGP) shows a compositional bias: polar residues. Over residues 583 to 593 (SISTSSDDTTT) the composition is skewed to low complexity.

The polypeptide is Protein CFAP20DC (CFAP20DC) (Macaca fascicularis (Crab-eating macaque)).